Here is a 107-residue protein sequence, read N- to C-terminus: MKVTDVRLRKIQTDGRMKALVSITLDDAFVVHDLRVIEGNSGLFVAMPSKRTPDGEFRDIAHPINSDMRQEIQDAVMKVYDETDEVIPDKNAQPSSDSEDNGSEEEA.

The disordered stretch occupies residues 82 to 107 (ETDEVIPDKNAQPSSDSEDNGSEEEA). Over residues 97–107 (DSEDNGSEEEA) the composition is skewed to acidic residues.

Belongs to the SpoVG family.

Its function is as follows. Could be involved in septation. The protein is Putative septation protein SpoVG of Staphylococcus carnosus (strain TM300).